The following is a 49-amino-acid chain: Large ribosomal subunit protein bL33 (49 aa).

It belongs to the bacterial ribosomal protein bL33 family.

The chain is Large ribosomal subunit protein bL33 from Streptococcus suis (strain 98HAH33).